Here is a 365-residue protein sequence, read N- to C-terminus: DNA repair protein rhp51 (365 aa).

Residues 1-25 form a disordered region; the sequence is MADTEVEMQVSAADTNNNENGQAQS. A compositionally biased stretch (polar residues) spans 12-25; it reads AADTNNNENGQAQS. Residue 149 to 156 participates in ATP binding; sequence GEFRTGKS.

Belongs to the RecA family. RAD51 subfamily. In terms of assembly, interacts with rad22, rad54, rdh54, rhp54, rti1, swi2 and swi5. Forms homooiligomers.

The protein localises to the nucleus. In terms of biological role, required both for recombination and for the repair of DNA damage caused by X-rays. Binds to single and double-stranded DNA, in the presence of magnesium, and exhibits DNA-dependent ATPase activity. Promotes DNA strand annealing and strand exchange via DNA recombinase activity and forms helical nucleoprotein filaments. The sequence is that of DNA repair protein rhp51 (rhp51) from Schizosaccharomyces pombe (strain 972 / ATCC 24843) (Fission yeast).